The chain runs to 627 residues: MIYDYGYDVIVVGGGHAGVEAASASARIGAKTLLLTHNIDTIGQMSCNPAIGGIGKGHLVKEIDAMGGVMAKAIDMAGIQFRILNSRKGPAVRATRAQADRVLYKKAINSLINNQENLDIFQDSVDDLVVENNTVCGAITKTGITFRAKKVVLTVGTFLGGKIHIGKVSNAGGRAGDQPSNALAARLRSLPFRVDRLKTGTPPRIDRRSVDFSVMEVQHGDNPTPYFSFFSKGKIEHPRQIPCYITYTNNETHKIITDNLDKSAMYSGLIEGIGPRYCPSIEDKVVRFADKERHQIFVEPEGLNSIELYPNGLSTSLPFEVQCNYIRSIKGFEKAFIMRPGYAIEYDFFDPRDLKPTLETKHIKNLYFAGQINGTTGYEEAGAQGLVAGINAAISIDSDKSWYPTRADSYIGVLIDDLITKGTKEPYRMFTSRAEYRLILREDNADLRLSDKACELGLLSKEDQQHFISKKNAIIENIAMMKNTWIGPQTQKARDLEKFLDKKMTRESTLFDLLKRPEIDYSKLQQISELNLNLQDEAVIEQIEISAKYSGYIERQNKDIEKTATLEQKAIPTDFNYSQVKGLSNEVLQKLTEQKPTTLGEASRIPGITPAAISLLTIYMKKTGFIK.

Residues 13–18, valine 125, and serine 180 contribute to the FAD site; that span reads GGGHAG. An NAD(+)-binding site is contributed by 274 to 288; that stretch reads GPRYCPSIEDKVVRF. An FAD-binding site is contributed by glutamine 371.

Belongs to the MnmG family. As to quaternary structure, homodimer. Heterotetramer of two MnmE and two MnmG subunits. The cofactor is FAD.

It localises to the cytoplasm. NAD-binding protein involved in the addition of a carboxymethylaminomethyl (cmnm) group at the wobble position (U34) of certain tRNAs, forming tRNA-cmnm(5)s(2)U34. The protein is tRNA uridine 5-carboxymethylaminomethyl modification enzyme MnmG of Francisella tularensis subsp. novicida (strain U112).